We begin with the raw amino-acid sequence, 443 residues long: Glutamine synthetase (443 aa).

Residues 16–97 form the GS beta-grasp domain; that stretch reads KRIKFVQLIF…VYGYIYKDGK (82 aa). The GS catalytic domain occupies 103 to 443; that stretch reads PRGVLRRTLE…EWELERYFFI (341 aa). Positions 126 and 128 each coordinate Mg(2+). Glutamate 176 contributes to the ATP binding site. Mg(2+) is bound by residues glutamate 181 and glutamate 188. Glycine 233 provides a ligand contact to L-glutamate. Histidine 237 provides a ligand contact to Mg(2+). ATP contacts are provided by residues 239-241 and serine 241; that span reads HIS. Residues arginine 287, glutamate 293, and arginine 305 each coordinate L-glutamate. Residues arginine 305 and arginine 310 each coordinate ATP. Position 322 (glutamate 322) interacts with Mg(2+). Arginine 324 contacts L-glutamate.

This sequence belongs to the glutamine synthetase family. In terms of assembly, oligomer of 12 subunits arranged in the form of two hexagons. Requires Mg(2+) as cofactor.

It is found in the cytoplasm. It carries out the reaction L-glutamate + NH4(+) + ATP = L-glutamine + ADP + phosphate + H(+). Functionally, probably involved in nitrogen metabolism via ammonium assimilation. Catalyzes the ATP-dependent biosynthesis of glutamine from glutamate and ammonia. In Pyrococcus horikoshii (strain ATCC 700860 / DSM 12428 / JCM 9974 / NBRC 100139 / OT-3), this protein is Glutamine synthetase.